A 154-amino-acid polypeptide reads, in one-letter code: uncharacterized protein (154 aa).

2 coiled-coil regions span residues 8–48 (DEEV…AIEA) and 89–138 (VQEL…RGLV).

This is an uncharacterized protein from Treponema pallidum (strain Nichols).